A 95-amino-acid polypeptide reads, in one-letter code: Aspartyl/glutamyl-tRNA(Asn/Gln) amidotransferase subunit C (95 aa).

It belongs to the GatC family. In terms of assembly, heterotrimer of A, B and C subunits.

It carries out the reaction L-glutamyl-tRNA(Gln) + L-glutamine + ATP + H2O = L-glutaminyl-tRNA(Gln) + L-glutamate + ADP + phosphate + H(+). The enzyme catalyses L-aspartyl-tRNA(Asn) + L-glutamine + ATP + H2O = L-asparaginyl-tRNA(Asn) + L-glutamate + ADP + phosphate + 2 H(+). Its function is as follows. Allows the formation of correctly charged Asn-tRNA(Asn) or Gln-tRNA(Gln) through the transamidation of misacylated Asp-tRNA(Asn) or Glu-tRNA(Gln) in organisms which lack either or both of asparaginyl-tRNA or glutaminyl-tRNA synthetases. The reaction takes place in the presence of glutamine and ATP through an activated phospho-Asp-tRNA(Asn) or phospho-Glu-tRNA(Gln). This is Aspartyl/glutamyl-tRNA(Asn/Gln) amidotransferase subunit C from Geobacter sulfurreducens (strain ATCC 51573 / DSM 12127 / PCA).